Reading from the N-terminus, the 435-residue chain is 5-methylthioadenosine/S-adenosylhomocysteine deaminase (435 aa).

Residues H65 and H67 each coordinate Zn(2+). Substrate contacts are provided by E94, R150, and H189. H216 is a Zn(2+) binding site. Substrate-binding residues include E219 and D304. Zn(2+) is bound at residue D304.

Belongs to the metallo-dependent hydrolases superfamily. MTA/SAH deaminase family. Zn(2+) serves as cofactor.

The enzyme catalyses S-adenosyl-L-homocysteine + H2O + H(+) = S-inosyl-L-homocysteine + NH4(+). The catalysed reaction is S-methyl-5'-thioadenosine + H2O + H(+) = S-methyl-5'-thioinosine + NH4(+). Catalyzes the deamination of 5-methylthioadenosine and S-adenosyl-L-homocysteine into 5-methylthioinosine and S-inosyl-L-homocysteine, respectively. Is also able to deaminate adenosine. The polypeptide is 5-methylthioadenosine/S-adenosylhomocysteine deaminase (Bacillus cereus (strain 03BB102)).